Reading from the N-terminus, the 320-residue chain is 4-hydroxy-3-methylbut-2-enyl diphosphate reductase (320 aa).

C12 contributes to the [4Fe-4S] cluster binding site. Residues H41 and H74 each coordinate (2E)-4-hydroxy-3-methylbut-2-enyl diphosphate. H41 and H74 together coordinate dimethylallyl diphosphate. Residues H41 and H74 each contribute to the isopentenyl diphosphate site. [4Fe-4S] cluster is bound at residue C96. Residue H124 participates in (2E)-4-hydroxy-3-methylbut-2-enyl diphosphate binding. Position 124 (H124) interacts with dimethylallyl diphosphate. H124 contacts isopentenyl diphosphate. The active-site Proton donor is the E126. T167 contacts (2E)-4-hydroxy-3-methylbut-2-enyl diphosphate. Residue C197 participates in [4Fe-4S] cluster binding. (2E)-4-hydroxy-3-methylbut-2-enyl diphosphate contacts are provided by S225, S226, N227, and S269. The dimethylallyl diphosphate site is built by S225, S226, N227, and S269. S225, S226, N227, and S269 together coordinate isopentenyl diphosphate.

Belongs to the IspH family. It depends on [4Fe-4S] cluster as a cofactor.

It carries out the reaction isopentenyl diphosphate + 2 oxidized [2Fe-2S]-[ferredoxin] + H2O = (2E)-4-hydroxy-3-methylbut-2-enyl diphosphate + 2 reduced [2Fe-2S]-[ferredoxin] + 2 H(+). The enzyme catalyses dimethylallyl diphosphate + 2 oxidized [2Fe-2S]-[ferredoxin] + H2O = (2E)-4-hydroxy-3-methylbut-2-enyl diphosphate + 2 reduced [2Fe-2S]-[ferredoxin] + 2 H(+). Its pathway is isoprenoid biosynthesis; dimethylallyl diphosphate biosynthesis; dimethylallyl diphosphate from (2E)-4-hydroxy-3-methylbutenyl diphosphate: step 1/1. It participates in isoprenoid biosynthesis; isopentenyl diphosphate biosynthesis via DXP pathway; isopentenyl diphosphate from 1-deoxy-D-xylulose 5-phosphate: step 6/6. Its function is as follows. Catalyzes the conversion of 1-hydroxy-2-methyl-2-(E)-butenyl 4-diphosphate (HMBPP) into a mixture of isopentenyl diphosphate (IPP) and dimethylallyl diphosphate (DMAPP). Acts in the terminal step of the DOXP/MEP pathway for isoprenoid precursor biosynthesis. In Francisella tularensis subsp. novicida (strain U112), this protein is 4-hydroxy-3-methylbut-2-enyl diphosphate reductase.